Here is a 305-residue protein sequence, read N- to C-terminus: MSDLDRQIGQLKRCEPLSESEVKALCLKAMEILVEESNVQRVDAPVTLCGDIHGQFYDMMELFKVGGDCPKTNYLFMGDFVDRGYYSVETFLLLLALKVRYPDRITLIRGNHESRQITQVYGFYDECLRKYGSSNVWRYCTDIFDYMSLSAVVENKIFCVHGGLSPAIMTLDQIRTIDRKQEVPHDGAMCDLLWSDPEDIVDGWGLSPRGAGFLFGGSVVTSFNHSNNIDYIARAHQLVMEGYKWMFDSQIVTVWSAPNYCYRCGNVASILELDENLNKEFRVFDAAQQDSRGPPAKKPAPDYFL.

Residues D51, H53, D79, and N111 each contribute to the Mn(2+) site. Residue H112 is the Proton donor of the active site. Residues H161 and H236 each coordinate Mn(2+).

The protein belongs to the PPP phosphatase family. PP-4 (PP-X) subfamily. As to quaternary structure, interacts with TAP46. It depends on Mn(2+) as a cofactor. In terms of tissue distribution, ubiquitous, mostly expressed in root mersitems, flowers, and vascular tissues.

The protein resides in the plastid stroma. It carries out the reaction O-phospho-L-seryl-[protein] + H2O = L-seryl-[protein] + phosphate. The enzyme catalyses O-phospho-L-threonyl-[protein] + H2O = L-threonyl-[protein] + phosphate. The sequence is that of Serine/threonine-protein phosphatase PP-X isozyme 1 (PPX1) from Arabidopsis thaliana (Mouse-ear cress).